The sequence spans 354 residues: Ephrin-4 (354 aa).

A signal peptide spans 1–22 (MKRPLDFLLAICLILLRSSTFA). The Ephrin RBD domain maps to 23-173 (DEHTVHWNST…SKNMRLSMKV (151 aa)). Asn30 carries N-linked (GlcNAc...) asparagine glycosylation. Intrachain disulfides connect Cys55–Cys92 and Cys80–Cys162. Residues 173–196 (VLSSQPTPSPSSKPARSRTDARRQ) form a disordered region. Low complexity predominate over residues 175–186 (SSQPTPSPSSKP). The GPI-anchor amidated serine moiety is linked to residue Ser335. Residues 336-354 (SSSLPTFLIVFLIAVNLLF) constitute a propeptide, removed in mature form.

It belongs to the ephrin family. May undergo proteolysis by metalloprotease sup-17 to give rise to a soluble form.

It localises to the cell membrane. Its function is as follows. Regulates the formation or stabilization of cell-cell contacts at several stages of epithelial morphogenesis. In early embryonic development, involved in ventral closure of the epidermis. During male tail morphogenesis, regulates precursor cell sorting together with mab-20 and allows the formation of distinct sensory rays. Probably acts as a ligand for lad-2 to regulate axon guidance of several neurons including SDQL, SDQR, SMD and PLN neurons during neurogenesis. In Caenorhabditis briggsae, this protein is Ephrin-4 (efn-4).